We begin with the raw amino-acid sequence, 192 residues long: MSNTIKMVVGLGNPGKEYEQTRHNAGFWFLDELAWKWKASFKEEKKFFGEVARAALPDGDVWLLKPATFMNRSGQAVAALAQFYKIKPEEILVVHDELDIPCGRIKFKLGGGNGGHNGLKDIQAKLGTADYYRLRLGIGHPGDRNLVVGYVLNKPSAEHRRQIDDAVAKSLQAVPDIISGKWEEATRFLHSK.

Residue tyrosine 18 participates in tRNA binding. Residue histidine 23 is the Proton acceptor of the active site. Residues phenylalanine 69, asparagine 71, and asparagine 117 each contribute to the tRNA site.

This sequence belongs to the PTH family. Monomer.

The protein resides in the cytoplasm. The enzyme catalyses an N-acyl-L-alpha-aminoacyl-tRNA + H2O = an N-acyl-L-amino acid + a tRNA + H(+). Functionally, hydrolyzes ribosome-free peptidyl-tRNAs (with 1 or more amino acids incorporated), which drop off the ribosome during protein synthesis, or as a result of ribosome stalling. Its function is as follows. Catalyzes the release of premature peptidyl moieties from peptidyl-tRNA molecules trapped in stalled 50S ribosomal subunits, and thus maintains levels of free tRNAs and 50S ribosomes. The chain is Peptidyl-tRNA hydrolase from Neisseria gonorrhoeae (strain ATCC 700825 / FA 1090).